Here is an 852-residue protein sequence, read N- to C-terminus: MNGHFAAVGNGPTAQQYEHGIQVIDEDKAFNTNLNDYLGETRVAEAGFNYHLISVFGSQSTGKSTLLNHLFKTEFSVMSESARRQTTKGIWMSKNKRAGANGDAATMADNILVMDVEGTDGRERGEDQDFERKSALFALATSEVLIVNIWEHQIGLYQGANMGLLKTVFEVNLQLFLKDRQSQTRSLLFFVIRDHVGNTPLANLRDTLVQDLTKIWSTLSKPQGLEDSKIEDYFDFAFAALPHKILQPEKFLEEADKLSTRFTTGHRSAKDQEFVGGVFLPEYHRRIPADGLSVYAEGVWDQIVNNKDLDLPTQQELLAQFRCDEISREVFVGFDSVIVPLEEQQAEATRLGKATVLPDLGVTGAGTREKCVKAFETQASRYHKGVYSVKRGELESKIDARLKALYQTQLSAAHKSGVAAFSDAVTNAVKAGQKAGGYEFAEIVDKQKKKTLEFFKKEAQSLLIQGVAWTNFKPQYRLFEKELDEVSARLRKEEMRRLAIRVERWVKSRLGDSIGVEFNKLGSGRGGSGAPENGEKPATEKDLWDRIWNTFSGIIREAETRFADRAKSFEASPEEVEVGLWRLRRKSWVALREKIEEEMMESNILMKLRENFEDKFRYDEEGVPRIWRPTDDIEGIYTRARESTLGLIPLLARFRLAETYAPPDLPTFVGPQPAGAEPEDEEDLAPIGGVDEEEGKSLEEEMTVLSESKRQDLVVRFKKMADGVYVEAKRSAIGGITQVPLYFYIVLLIFGWNEIVMVLRNPMLFMLLLVMGGGTYVAYTLNLLGPMMQMANAASNQAVEIGKEKLRDFLENNQTMRQAIAMPPRSQDNGIGMDRLDSRGKKAQEVEEDDDI.

Residues 1 to 738 (MNGHFAAVGN…KRSAIGGITQ (738 aa)) are Cytoplasmic-facing. In terms of domain architecture, GB1/RHD3-type G spans 47-283 (GFNYHLISVF…FVGGVFLPEY (237 aa)). A GTP-binding site is contributed by 57–64 (GSQSTGKS). Residues 475–500 (QYRLFEKELDEVSARLRKEEMRRLAI) adopt a coiled-coil conformation. A helical membrane pass occupies residues 739–759 (VPLYFYIVLLIFGWNEIVMVL). The Lumenal segment spans residues 760-762 (RNP). Residues 763-783 (MLFMLLLVMGGGTYVAYTLNL) traverse the membrane as a helical segment. The Cytoplasmic segment spans residues 784-852 (LGPMMQMANA…AQEVEEDDDI (69 aa)). The segment at 825 to 852 (RSQDNGIGMDRLDSRGKKAQEVEEDDDI) is disordered. Residues 834-845 (DRLDSRGKKAQE) are compositionally biased toward basic and acidic residues.

It belongs to the TRAFAC class dynamin-like GTPase superfamily. GB1/RHD3 GTPase family. RHD3 subfamily.

It localises to the endoplasmic reticulum membrane. Its function is as follows. Cooperates with the reticulon proteins and tubule-shaping DP1 family proteins to generate and maintain the structure of the tubular endoplasmic reticulum network. Has GTPase activity, which is required for its function in ER organization. This Chaetomium globosum (strain ATCC 6205 / CBS 148.51 / DSM 1962 / NBRC 6347 / NRRL 1970) (Soil fungus) protein is Protein SEY1.